A 1117-amino-acid chain; its full sequence is Leucine-rich repeats and immunoglobulin-like domains protein 3 (1117 aa).

An N-terminal signal peptide occupies residues 1-24 (MGAPGLRAATAALGLLLCAGLGRA). The LRRNT domain maps to 38-74 (LLDDDAQRPCPAACHCLGDLLDCSRRRLVRLPDPLPA). 15 LRR repeats span residues 75–98 (WVTR…SHLQ), 99–120 (SLQE…GSIS), 122–143 (NIRQ…QLEA), 146–168 (SLET…PPLQ), 169–189 (LKYL…YFDN), 193–214 (TLLV…MFKL), 216–237 (QLQH…TFQG), 240–261 (ALKS…AFWG), 264–285 (NMEV…WLYG), 288–309 (MLRE…AWEF), 312–333 (KLSE…SFLG), 336–357 (LLNA…AFRG), 360–382 (SLKT…SGAF), 387–408 (RLRQ…AFAG), and 411–432 (TLEH…AFSQ). An N-linked (GlcNAc...) asparagine glycan is attached at Asn-156. Asn-274 carries N-linked (GlcNAc...) asparagine glycosylation. Residues Asn-442 and Asn-469 are each glycosylated (N-linked (GlcNAc...) asparagine). An LRRCT domain is found at 444–495 (SSLLCDCQLRWLPQWVAENNFQSFVNASCAHPQLLKGRSIFTVSPDGFVCDD). Ig-like C2-type domains follow at residues 499–598 (PQIT…AKLT), 603–692 (PSFT…ATLT), and 697–783 (PSFL…VRLS). Intrachain disulfides connect Cys-520-Cys-581 and Cys-624-Cys-676. N-linked (GlcNAc...) asparagine glycans are attached at residues Asn-688 and Asn-729. Cys-718 and Cys-767 are joined by a disulfide. The helical transmembrane segment at 810–830 (VVIIAVVCCVVGTSLVWVVII) threads the bilayer. N-linked (GlcNAc...) asparagine glycosylation is present at Asn-1014. The tract at residues 1019-1093 (DFSTGPEPGS…KERTDFREEN (75 aa)) is disordered. Over residues 1083–1093 (DKERTDFREEN) the composition is skewed to basic and acidic residues.

As to quaternary structure, interacts with EGFR, ERBB2 and ERBB4 (in vitro). As to expression, widely expressed.

It localises to the cell membrane. Its subcellular location is the cytoplasmic vesicle membrane. Functionally, plays a role in craniofacial and inner ear morphogenesis during embryonic development. Acts within the otic vesicle epithelium to control formation of the lateral semicircular canal in the inner ear, possibly by restricting the expression of NTN1. The protein is Leucine-rich repeats and immunoglobulin-like domains protein 3 (Lrig3) of Mus musculus (Mouse).